A 202-amino-acid chain; its full sequence is LexA repressor (202 aa).

The H-T-H motif DNA-binding region spans 28–48; that stretch reads RAEIAQELGFKSPNAAEEHLK. Active-site for autocatalytic cleavage activity residues include Ser123 and Lys160.

Belongs to the peptidase S24 family. In terms of assembly, homodimer.

It catalyses the reaction Hydrolysis of Ala-|-Gly bond in repressor LexA.. Represses a number of genes involved in the response to DNA damage (SOS response), including recA and lexA. In the presence of single-stranded DNA, RecA interacts with LexA causing an autocatalytic cleavage which disrupts the DNA-binding part of LexA, leading to derepression of the SOS regulon and eventually DNA repair. The protein is LexA repressor of Pseudomonas chlororaphis (Pseudomonas aureofaciens).